A 339-amino-acid polypeptide reads, in one-letter code: Olfactory receptor 7E24 (339 aa).

Topologically, residues 1–43 (MSYFPILFFFFLKRCPSYTEPQNLTGVSEFLLLGLSEDPELQP) are extracellular. N-linked (GlcNAc...) asparagine glycosylation is present at Asn23. Residues 44 to 64 (VLAGLFLSMYLVTVLGNLLII) form a helical membrane-spanning segment. Residues 65 to 72 (LAVSSDSH) lie on the Cytoplasmic side of the membrane. The chain crosses the membrane as a helical span at residues 73-93 (LHTPMYFFLSNLSLADIGFTS). Residues 94–117 (TTVPKMIVDMQTHSRVISYEGCLT) lie on the Extracellular side of the membrane. Cys115 and Cys207 are oxidised to a cystine. Residues 118-138 (QMSFFVLFACMDDMLLSVMAY) traverse the membrane as a helical segment. The Cytoplasmic portion of the chain corresponds to 139 to 157 (DRFVAICHPLHYRIIMNPR). A helical membrane pass occupies residues 158-178 (LCGFLILLSFFISLLDSQLHN). Residues 179 to 215 (LIMLQLTCFKDVDISNFFCDPSQLLHLRCSDTFINEM) are Extracellular-facing. A helical transmembrane segment spans residues 216–235 (VIYFMGAIFGCLPISGILFS). The Cytoplasmic portion of the chain corresponds to 236 to 255 (YYKIVSPILRVPTSDGKYKA). A helical membrane pass occupies residues 256 to 276 (FSTCGSHLAVVCLFYGTGLVG). Residues 277–289 (YLSSAVLPSPRKS) are Extracellular-facing. A helical transmembrane segment spans residues 290-310 (MVASVMYTVVTPMLNPFIYSL). At 311-339 (RNKDIQSALCRLHGRIIKSHHLHPFCYMG) the chain is on the cytoplasmic side.

Belongs to the G-protein coupled receptor 1 family.

It is found in the cell membrane. Functionally, odorant receptor. The protein is Olfactory receptor 7E24 (OR7E24) of Homo sapiens (Human).